The sequence spans 690 residues: Choline transporter-like 1 (690 aa).

The helical transmembrane segment at 23–43 threads the bilayer; sequence IFWLVLYVVFWIALIVIAVFS. Residue Asn-134 is glycosylated (N-linked (GlcNAc...) asparagine). Helical transmembrane passes span 203-223, 237-259, 282-302, and 334-354; these read LYKA…FSIV, WLIC…WSYY, ATIY…LVVI, and LLAF…VVCL. Asn-391 carries N-linked (GlcNAc...) asparagine glycosylation. 4 consecutive transmembrane segments (helical) span residues 415–435, 464–484, 565–585, and 594–614; these read IYII…QLAI, LGSV…RLIL, FVLF…SILL, and FYMA…HIIL.

It belongs to the CTL (choline transporter-like) family.

It is found in the membrane. The polypeptide is Choline transporter-like 1 (Anopheles gambiae (African malaria mosquito)).